The chain runs to 1172 residues: Ras guanine nucleotide exchange factor W (1172 aa).

Composition is skewed to low complexity over residues 34–70 (PIYT…LNNL) and 78–87 (NSNSVNNTIS). Disordered stretches follow at residues 34 to 100 (PIYT…RSNT), 138 to 162 (KFLD…RIQQ), and 186 to 246 (FKRS…EIKD). The span at 194 to 241 (QPPQSQSQQQQQLQLQQQQQQSMPNLSLGNNINSNNNNNNGSENNDIS) shows a compositional bias: low complexity. 6 helical membrane passes run 286–306 (IWLT…DIIG), 320–340 (IMAV…LNLF), 347–367 (FPGT…VTDI), 378–400 (VLSI…ISLI), 432–452 (LTTN…QLLV), and 545–565 (ILHL…NLLI). Residues 666–702 (LLGMLNEIDDSLQAAKEKVEEESIQNSILKKDIEDLY) adopt a coiled-coil conformation. In terms of domain architecture, N-terminal Ras-GEF spans 765–903 (DLNVIQYATI…YIDSIHKRKM (139 aa)). The region spanning 938 to 1170 (DISDIAIQIT…WKMSLSCEQR (233 aa)) is the Ras-GEF domain.

Its subcellular location is the membrane. Its function is as follows. Promotes the exchange of Ras-bound GDP by GTP. In Dictyostelium discoideum (Social amoeba), this protein is Ras guanine nucleotide exchange factor W (gefW).